A 193-amino-acid chain; its full sequence is dTTP/UTP pyrophosphatase (193 aa).

Aspartate 70 acts as the Proton acceptor in catalysis.

This sequence belongs to the Maf family. YhdE subfamily. A divalent metal cation serves as cofactor.

Its subcellular location is the cytoplasm. The enzyme catalyses dTTP + H2O = dTMP + diphosphate + H(+). It carries out the reaction UTP + H2O = UMP + diphosphate + H(+). In terms of biological role, nucleoside triphosphate pyrophosphatase that hydrolyzes dTTP and UTP. May have a dual role in cell division arrest and in preventing the incorporation of modified nucleotides into cellular nucleic acids. The protein is dTTP/UTP pyrophosphatase of Ruminiclostridium cellulolyticum (strain ATCC 35319 / DSM 5812 / JCM 6584 / H10) (Clostridium cellulolyticum).